Consider the following 202-residue polypeptide: Putative transmembrane protein ORF202 (202 aa).

Transmembrane regions (helical) follow at residues 13–33, 40–60, 87–107, 156–176, and 177–197; these read AIAF…FHYI, VFYL…LFLG, YYPV…ISVF, YGAL…HSLS, and LTAF…DLWA.

Its subcellular location is the host membrane. The protein is Putative transmembrane protein ORF202 of Acidianus filamentous virus 2 (isolate Italy/Pozzuoli) (AFV-2).